The primary structure comprises 267 residues: Dihydropteroate synthase (267 aa).

Residues 1–251 enclose the Pterin-binding domain; it reads MTKTKIIGIL…NVDLNVKLAQ (251 aa). Asparagine 11 serves as a coordination point for Mg(2+). Residues threonine 51, aspartate 84, asparagine 103, aspartate 167, lysine 203, and 239–241 contribute to the (7,8-dihydropterin-6-yl)methyl diphosphate site; that span reads RVH.

This sequence belongs to the DHPS family. Requires Mg(2+) as cofactor.

The enzyme catalyses (7,8-dihydropterin-6-yl)methyl diphosphate + 4-aminobenzoate = 7,8-dihydropteroate + diphosphate. The protein operates within cofactor biosynthesis; tetrahydrofolate biosynthesis; 7,8-dihydrofolate from 2-amino-4-hydroxy-6-hydroxymethyl-7,8-dihydropteridine diphosphate and 4-aminobenzoate: step 1/2. Its function is as follows. Catalyzes the condensation of para-aminobenzoate (pABA) with 6-hydroxymethyl-7,8-dihydropterin diphosphate (DHPt-PP) to form 7,8-dihydropteroate (H2Pte), the immediate precursor of folate derivatives. This chain is Dihydropteroate synthase (folP), found in Staphylococcus haemolyticus.